A 358-amino-acid polypeptide reads, in one-letter code: Core-capsid bridging protein (358 aa).

The interval 296 to 331 (PSITPTPGYRGTTFKPSRTRSTRRRRSVRRRSRRTA) is disordered. The span at 312–329 (SRTRSTRRRRSVRRRSRR) shows a compositional bias: basic residues.

Belongs to the adenoviridae core-capsid bridging protein family. As to quaternary structure, monomer. Homodimer. Exists in equilibrium between monomers and dimers in solution. Interacts with the histone-like nucleoprotein; this interactions bridge the virus core to the capsid. Interacts with core protein X; this interactions bridge the virus core to the capsid. Interacts with the endosome lysis protein VI; this interactions bridge the virus core to the capsid. Interacts with the peripentonal hexons. Interacts with host NPM1; this interaction might play a role in virus assembly.

It is found in the virion. It localises to the host nucleus. The protein localises to the host nucleolus. Associates loosely with the viral DNA to form an outer shell around the nucleoprotein-DNA complex and links it with the capsid by binding the endosome lysis protein. Dissociates from the viral genome during entry. Might be involved in nuclear capsid assembly of the viral particles through its association with NPM1/nucleophosmin. The protein is Core-capsid bridging protein of Human adenovirus F serotype 40 (HAdV-40).